Reading from the N-terminus, the 136-residue chain is Galectin-7 (136 aa).

The 131-residue stretch at 6 to 136 (HKSSLPEGIR…DVQLDSVRIF (131 aa)) folds into the Galectin domain. A beta-D-galactoside is bound at residue 70-76 (WGREERG).

In terms of assembly, monomer. As to expression, mainly expressed in stratified squamous epithelium.

It localises to the cytoplasm. The protein resides in the nucleus. The protein localises to the secreted. Functionally, could be involved in cell-cell and/or cell-matrix interactions necessary for normal growth control. Pro-apoptotic protein that functions intracellularly upstream of JNK activation and cytochrome c release. The sequence is that of Galectin-7 (LGALS7) from Homo sapiens (Human).